Reading from the N-terminus, the 350-residue chain is S-adenosylmethionine:tRNA ribosyltransferase-isomerase (350 aa).

Belongs to the QueA family. Monomer.

The protein localises to the cytoplasm. The catalysed reaction is 7-aminomethyl-7-carbaguanosine(34) in tRNA + S-adenosyl-L-methionine = epoxyqueuosine(34) in tRNA + adenine + L-methionine + 2 H(+). Its pathway is tRNA modification; tRNA-queuosine biosynthesis. Transfers and isomerizes the ribose moiety from AdoMet to the 7-aminomethyl group of 7-deazaguanine (preQ1-tRNA) to give epoxyqueuosine (oQ-tRNA). The chain is S-adenosylmethionine:tRNA ribosyltransferase-isomerase from Bacillus cereus (strain 03BB102).